Reading from the N-terminus, the 65-residue chain is Hirudin-3A' (65 aa).

The tract at residues 1 to 3 (VVY) is interaction with thrombin active site. 3 cysteine pairs are disulfide-bonded: cysteine 6–cysteine 14, cysteine 16–cysteine 28, and cysteine 22–cysteine 39. Residues 32–65 (SDGEKNECVTGEGTPKPQSHNDGDFEEIPEEYLQ) form a disordered region. A glycan (O-linked (GalNAc...) threonine) is linked at threonine 45. The segment at 55-65 (DFEEIPEEYLQ) is interaction with fibrinogen-binding exosite of thrombin. Residues 55–65 (DFEEIPEEYLQ) are compositionally biased toward acidic residues. Tyrosine 63 carries the post-translational modification Sulfotyrosine.

This sequence belongs to the protease inhibitor I14 (hirudin) family.

Its subcellular location is the secreted. In terms of biological role, hirudin is a potent thrombin-specific protease inhibitor. It forms a stable non-covalent complex with alpha-thrombin, thereby abolishing its ability to cleave fibrinogen. This chain is Hirudin-3A', found in Hirudo medicinalis (Medicinal leech).